Consider the following 458-residue polypeptide: Serine protease Do-like HtrB (458 aa).

A compositionally biased stretch (basic and acidic residues) spans 1 to 18 (MDYRRDGQNDQHQTEPSH). Residues 1–42 (MDYRRDGQNDQHQTEPSHTEQQNTENQKLIGHSEQELLDAPV) are disordered. The Cytoplasmic segment spans residues 1–71 (MDYRRDGQND…TAVKKEKKRR (71 aa)). A helical transmembrane segment spans residues 72 to 92 (AAWLSPILGGIIGGGLMLGIA). The Extracellular portion of the chain corresponds to 93 to 458 (PYLPSDQNQA…LTKQTESSSS (366 aa)). The disordered stretch occupies residues 146–170 (QTSQNNTFGTGGGSSSESESGTGSG). Active-site charge relay system residues include histidine 187, aspartate 217, and serine 298. Residues 296–298 (GNS) and 352–356 (LGVQM) each bind substrate. The PDZ domain maps to 356–440 (MIDMSQVPET…KTTIQVLRKG (85 aa)).

The protein belongs to the peptidase S1C family.

Its subcellular location is the cell membrane. It carries out the reaction Acts on substrates that are at least partially unfolded. The cleavage site P1 residue is normally between a pair of hydrophobic residues, such as Val-|-Val.. In terms of biological role, degrades abnormal exported proteins and responsible for the propeptide processing of a natural pro-protein and for the maturation of a native protein. It also plays a prominent role in stress (heat shock, ethanol, puromycin and NaCl) resistance during active exponential growth. The polypeptide is Serine protease Do-like HtrB (htrB) (Bacillus subtilis (strain 168)).